The primary structure comprises 392 residues: Stilbene synthase 5 (392 aa).

55-58 is a binding site for substrate; the sequence is KFNR. Residue cysteine 164 is part of the active site. Residues leucine 267 and 305-307 contribute to the substrate site; that span reads GGP.

This sequence belongs to the thiolase-like superfamily. Chalcone/stilbene synthases family. As to quaternary structure, homodimer.

The protein resides in the cytoplasm. The catalysed reaction is 4-coumaroyl-CoA + 3 malonyl-CoA + 3 H(+) = trans-resveratrol + 4 CO2 + 4 CoA. It functions in the pathway phytoalexin biosynthesis; 3,4',5-trihydroxystilbene biosynthesis; 3,4',5-trihydroxystilbene from trans-4-coumarate: step 2/2. Functionally, mediates resistance to pathogens which are sensitive to stilbenes. This is Stilbene synthase 5 from Vitis vinifera (Grape).